The following is a 427-amino-acid chain: G2/mitotic-specific cyclin-B1 (427 aa).

Residues 33–126 (ATSKPGLRPR…DTPSPSPMET (94 aa)) form a disordered region. Residue lysine 73 is modified to N6-acetyllysine. The segment covering 100-110 (EPEHVKEDKLS) has biased composition (basic and acidic residues). The residue at position 120 (serine 120) is a Phosphoserine; by CDK1. Serine 122 carries the post-translational modification Phosphoserine. Position 127 is a phosphoserine; by PLK1 (serine 127). Residue serine 141 is modified to Phosphoserine. 2 interaction with CDK2 regions span residues 163-171 (EYVKDIYAY) and 252-255 (YEEM). Threonine 315 is subject to Phosphothreonine.

Belongs to the cyclin family. Cyclin AB subfamily. Interacts with the CDC2 protein kinase to form a serine/threonine kinase holoenzyme complex also known as maturation promoting factor (MPF). The cyclin subunit imparts substrate specificity to the complex. Binds HEI10. Interacts with catalytically active RALBP1 and CDC2 during mitosis to form an endocytotic complex during interphase. Interacts with CCNF; interaction is required for nuclear localization. Interacts with CDK5RAP3. Interacts with RFPL4A and UBE2A. Interacts with INCA1. In terms of processing, ubiquitinated by the SCF(NIPA) complex during interphase, leading to its destruction. Deubiquitinated by USP22 during G2/M phase. Post-translationally, phosphorylated by PLK1 at Ser-127 on centrosomes during prophase: phosphorylation by PLK1 does not cause nuclear import. Phosphorylation at Ser-141 was also reported to be mediated by PLK1 but Ser-127 seems to be the primary phosphorylation site.

The protein resides in the cytoplasm. The protein localises to the nucleus. It localises to the cytoskeleton. It is found in the microtubule organizing center. Its subcellular location is the centrosome. Essential for the control of the cell cycle at the G2/M (mitosis) transition. This is G2/mitotic-specific cyclin-B1 (CCNB1) from Bos taurus (Bovine).